The primary structure comprises 227 residues: Cytochrome c oxidase subunit 2 (227 aa).

The Mitochondrial intermembrane segment spans residues 1 to 14; the sequence is MAYPVQLGFQDAAS. Residues 15–45 traverse the membrane as a helical segment; sequence PIMEELLYFHDHTLMIVFLISSLVLYIISLM. Residues 46-59 lie on the Mitochondrial matrix side of the membrane; sequence LTTKLMHTSTMDAQ. A helical transmembrane segment spans residues 60–87; it reads EVETVWTILPAIILILIALPSLRILYMM. The Mitochondrial intermembrane portion of the chain corresponds to 88-227; that stretch reads DEITTPSLTL…HFEEWLLSMF (140 aa). Cu cation contacts are provided by His161, Cys196, Glu198, Cys200, His204, and Met207. A Mg(2+)-binding site is contributed by Glu198.

It belongs to the cytochrome c oxidase subunit 2 family. As to quaternary structure, component of the cytochrome c oxidase (complex IV, CIV), a multisubunit enzyme composed of 14 subunits. The complex is composed of a catalytic core of 3 subunits MT-CO1, MT-CO2 and MT-CO3, encoded in the mitochondrial DNA, and 11 supernumerary subunits COX4I, COX5A, COX5B, COX6A, COX6B, COX6C, COX7A, COX7B, COX7C, COX8 and NDUFA4, which are encoded in the nuclear genome. The complex exists as a monomer or a dimer and forms supercomplexes (SCs) in the inner mitochondrial membrane with NADH-ubiquinone oxidoreductase (complex I, CI) and ubiquinol-cytochrome c oxidoreductase (cytochrome b-c1 complex, complex III, CIII), resulting in different assemblies (supercomplex SCI(1)III(2)IV(1) and megacomplex MCI(2)III(2)IV(2)). Found in a complex with TMEM177, COA6, COX18, COX20, SCO1 and SCO2. Interacts with TMEM177 in a COX20-dependent manner. Interacts with COX20. Interacts with COX16. Requires Cu cation as cofactor.

The protein localises to the mitochondrion inner membrane. It catalyses the reaction 4 Fe(II)-[cytochrome c] + O2 + 8 H(+)(in) = 4 Fe(III)-[cytochrome c] + 2 H2O + 4 H(+)(out). Its function is as follows. Component of the cytochrome c oxidase, the last enzyme in the mitochondrial electron transport chain which drives oxidative phosphorylation. The respiratory chain contains 3 multisubunit complexes succinate dehydrogenase (complex II, CII), ubiquinol-cytochrome c oxidoreductase (cytochrome b-c1 complex, complex III, CIII) and cytochrome c oxidase (complex IV, CIV), that cooperate to transfer electrons derived from NADH and succinate to molecular oxygen, creating an electrochemical gradient over the inner membrane that drives transmembrane transport and the ATP synthase. Cytochrome c oxidase is the component of the respiratory chain that catalyzes the reduction of oxygen to water. Electrons originating from reduced cytochrome c in the intermembrane space (IMS) are transferred via the dinuclear copper A center (CU(A)) of subunit 2 and heme A of subunit 1 to the active site in subunit 1, a binuclear center (BNC) formed by heme A3 and copper B (CU(B)). The BNC reduces molecular oxygen to 2 water molecules using 4 electrons from cytochrome c in the IMS and 4 protons from the mitochondrial matrix. The protein is Cytochrome c oxidase subunit 2 (MT-CO2) of Propithecus tattersalli (Golden-crowned Sifaka).